Here is a 307-residue protein sequence, read N- to C-terminus: tRNA dimethylallyltransferase (307 aa).

6–13 contributes to the ATP binding site; it reads GATATGKT. Residue 8–13 participates in substrate binding; it reads TATGKT. The interval 31 to 34 is interaction with substrate tRNA; that stretch reads DSMM.

It belongs to the IPP transferase family. Monomer. Mg(2+) is required as a cofactor.

It carries out the reaction adenosine(37) in tRNA + dimethylallyl diphosphate = N(6)-dimethylallyladenosine(37) in tRNA + diphosphate. In terms of biological role, catalyzes the transfer of a dimethylallyl group onto the adenine at position 37 in tRNAs that read codons beginning with uridine, leading to the formation of N6-(dimethylallyl)adenosine (i(6)A). This is tRNA dimethylallyltransferase from Sulfurihydrogenibium sp. (strain YO3AOP1).